Consider the following 217-residue polypeptide: ITG-like peptide (217 aa).

An N-terminal signal peptide occupies residues 1-21 (MHRTMAVTAVLVLSAAGAAHA). The propeptide occupies 22–208 (WGGLFNRFSS…REFVQHTAGE (187 aa)).

As to expression, ITG-like peptide: Expressed in corpora cardiaca (CC), corpora allata (CA), antennal lobe (AL) and gnathal ganglion (GNG) (at protein level). Expression in AL detected in all animals, expression in GNG detected in most animals and in CA and CC detected in few animals (at protein level).

The protein resides in the secreted. The chain is ITG-like peptide from Agrotis ipsilon (Black cutworm moth).